The chain runs to 108 residues: Large ribosomal subunit protein uL22 (108 aa).

Belongs to the universal ribosomal protein uL22 family. Part of the 50S ribosomal subunit.

Functionally, this protein binds specifically to 23S rRNA; its binding is stimulated by other ribosomal proteins, e.g. L4, L17, and L20. It is important during the early stages of 50S assembly. It makes multiple contacts with different domains of the 23S rRNA in the assembled 50S subunit and ribosome. Its function is as follows. The globular domain of the protein is located near the polypeptide exit tunnel on the outside of the subunit, while an extended beta-hairpin is found that lines the wall of the exit tunnel in the center of the 70S ribosome. This chain is Large ribosomal subunit protein uL22, found in Nitratiruptor sp. (strain SB155-2).